An 860-amino-acid polypeptide reads, in one-letter code: Leucine--tRNA ligase (860 aa).

A 'HIGH' region motif is present at residues 42–52 (PYPSGRLHMGH). Residues 619-623 (KMSKS) carry the 'KMSKS' region motif. Residue lysine 622 coordinates ATP.

It belongs to the class-I aminoacyl-tRNA synthetase family.

The protein localises to the cytoplasm. The enzyme catalyses tRNA(Leu) + L-leucine + ATP = L-leucyl-tRNA(Leu) + AMP + diphosphate. This chain is Leucine--tRNA ligase, found in Yersinia pseudotuberculosis serotype O:3 (strain YPIII).